The chain runs to 363 residues: Probable dual-specificity RNA methyltransferase RlmN (363 aa).

Residue E106 is the Proton acceptor of the active site. A Radical SAM core domain is found at 112–345; the sequence is HEYGNSVCVT…VTIRREQGHD (234 aa). Cysteines 119 and 350 form a disulfide. The [4Fe-4S] cluster site is built by C126, C130, and C133. S-adenosyl-L-methionine is bound by residues 176–177, S208, 231–233, and N307; these read GE and SLH. C350 (S-methylcysteine intermediate) is an active-site residue.

Belongs to the radical SAM superfamily. RlmN family. It depends on [4Fe-4S] cluster as a cofactor.

It localises to the cytoplasm. It catalyses the reaction adenosine(2503) in 23S rRNA + 2 reduced [2Fe-2S]-[ferredoxin] + 2 S-adenosyl-L-methionine = 2-methyladenosine(2503) in 23S rRNA + 5'-deoxyadenosine + L-methionine + 2 oxidized [2Fe-2S]-[ferredoxin] + S-adenosyl-L-homocysteine. The enzyme catalyses adenosine(37) in tRNA + 2 reduced [2Fe-2S]-[ferredoxin] + 2 S-adenosyl-L-methionine = 2-methyladenosine(37) in tRNA + 5'-deoxyadenosine + L-methionine + 2 oxidized [2Fe-2S]-[ferredoxin] + S-adenosyl-L-homocysteine. In terms of biological role, specifically methylates position 2 of adenine 2503 in 23S rRNA and position 2 of adenine 37 in tRNAs. In Bacillus subtilis (strain 168), this protein is Probable dual-specificity RNA methyltransferase RlmN.